The sequence spans 191 residues: Holliday junction branch migration complex subunit RuvA (191 aa).

Residues 1-63 (MIRYLRGLVL…EEGLSLYGFP (63 aa)) are domain I. The interval 64-136 (DEENLALFEL…LKGKVPPHLL (73 aa)) is domain II. The tract at residues 136–140 (LAGEK) is flexible linker. A domain III region spans residues 141 to 191 (VESEAAEEAVMALAALGFKEAQARAVVLDLLAQNPKARAQDLIKEALKRLR).

Belongs to the RuvA family. As to quaternary structure, homotetramer. Forms an RuvA(8)-RuvB(12)-Holliday junction (HJ) complex. HJ DNA is sandwiched between 2 RuvA tetramers; dsDNA enters through RuvA and exits via RuvB. An RuvB hexamer assembles on each DNA strand where it exits the tetramer. Each RuvB hexamer is contacted by two RuvA subunits (via domain III) on 2 adjacent RuvB subunits; this complex drives branch migration. In the full resolvosome a probable DNA-RuvA(4)-RuvB(12)-RuvC(2) complex forms which resolves the HJ.

It is found in the cytoplasm. The RuvA-RuvB-RuvC complex processes Holliday junction (HJ) DNA during genetic recombination and DNA repair, while the RuvA-RuvB complex plays an important role in the rescue of blocked DNA replication forks via replication fork reversal (RFR). RuvA specifically binds to HJ cruciform DNA, conferring on it an open structure. The RuvB hexamer acts as an ATP-dependent pump, pulling dsDNA into and through the RuvAB complex. HJ branch migration allows RuvC to scan DNA until it finds its consensus sequence, where it cleaves and resolves the cruciform DNA. The chain is Holliday junction branch migration complex subunit RuvA from Thermus thermophilus (strain ATCC BAA-163 / DSM 7039 / HB27).